A 308-amino-acid chain; its full sequence is Large ribosomal subunit protein mL38 (308 aa).

A mitochondrion-targeting transit peptide spans 1 to 17; the sequence is MKRVWPRIPTISNVCRA.

This sequence belongs to the phosphatidylethanolamine-binding protein family. Mitochondrion-specific ribosomal protein mL38 subfamily. Component of the mitochondrial large ribosomal subunit (mt-LSU). Mature yeast 74S mitochondrial ribosomes consist of a small (37S) and a large (54S) subunit. The 37S small subunit contains a 15S ribosomal RNA (15S mt-rRNA) and at least 32 different proteins. The 54S large subunit contains a 21S rRNA (21S mt-rRNA) and at least 45 different proteins.

Its subcellular location is the mitochondrion. In terms of biological role, component of the mitochondrial ribosome (mitoribosome), a dedicated translation machinery responsible for the synthesis of mitochondrial genome-encoded proteins, including at least some of the essential transmembrane subunits of the mitochondrial respiratory chain. The mitoribosomes are attached to the mitochondrial inner membrane and translation products are cotranslationally integrated into the membrane. The sequence is that of Large ribosomal subunit protein mL38 (mrpl35) from Schizosaccharomyces pombe (strain 972 / ATCC 24843) (Fission yeast).